Here is a 504-residue protein sequence, read N- to C-terminus: Protein nucleotidyltransferase YdiU (504 aa).

ATP contacts are provided by G99, G101, R102, K122, D134, G135, R185, and R192. The active-site Proton acceptor is the D261. Residues N262 and D271 each contribute to the Mg(2+) site. Residue D271 participates in ATP binding.

This sequence belongs to the SELO family. Mg(2+) serves as cofactor. The cofactor is Mn(2+).

The catalysed reaction is L-seryl-[protein] + ATP = 3-O-(5'-adenylyl)-L-seryl-[protein] + diphosphate. It catalyses the reaction L-threonyl-[protein] + ATP = 3-O-(5'-adenylyl)-L-threonyl-[protein] + diphosphate. It carries out the reaction L-tyrosyl-[protein] + ATP = O-(5'-adenylyl)-L-tyrosyl-[protein] + diphosphate. The enzyme catalyses L-histidyl-[protein] + UTP = N(tele)-(5'-uridylyl)-L-histidyl-[protein] + diphosphate. The catalysed reaction is L-seryl-[protein] + UTP = O-(5'-uridylyl)-L-seryl-[protein] + diphosphate. It catalyses the reaction L-tyrosyl-[protein] + UTP = O-(5'-uridylyl)-L-tyrosyl-[protein] + diphosphate. Nucleotidyltransferase involved in the post-translational modification of proteins. It can catalyze the addition of adenosine monophosphate (AMP) or uridine monophosphate (UMP) to a protein, resulting in modifications known as AMPylation and UMPylation. The polypeptide is Protein nucleotidyltransferase YdiU (Methylococcus capsulatus (strain ATCC 33009 / NCIMB 11132 / Bath)).